The primary structure comprises 285 residues: Shikimate dehydrogenase (NADP(+)) (285 aa).

Residues 19-21 (SLS) and T66 each bind shikimate. The Proton acceptor role is filled by K70. Shikimate-binding residues include N91 and D107. NADP(+) contacts are provided by residues 129-133 (GSGGA) and L228. Y230 contributes to the shikimate binding site. G251 contributes to the NADP(+) binding site.

The protein belongs to the shikimate dehydrogenase family. As to quaternary structure, homodimer.

The catalysed reaction is shikimate + NADP(+) = 3-dehydroshikimate + NADPH + H(+). The protein operates within metabolic intermediate biosynthesis; chorismate biosynthesis; chorismate from D-erythrose 4-phosphate and phosphoenolpyruvate: step 4/7. In terms of biological role, involved in the biosynthesis of the chorismate, which leads to the biosynthesis of aromatic amino acids. Catalyzes the reversible NADPH linked reduction of 3-dehydroshikimate (DHSA) to yield shikimate (SA). The polypeptide is Shikimate dehydrogenase (NADP(+)) (Prochlorococcus marinus subsp. pastoris (strain CCMP1986 / NIES-2087 / MED4)).